Reading from the N-terminus, the 526-residue chain is tRNA-2-methylthio-N(6)-dimethylallyladenosine synthase (526 aa).

In terms of domain architecture, MTTase N-terminal spans 14–130 (RTYQVRTYGC…LPTLLERARH (117 aa)). 6 residues coordinate [4Fe-4S] cluster: Cys-23, Cys-59, Cys-93, Cys-167, Cys-171, and Cys-174. One can recognise a Radical SAM core domain in the interval 153 to 401 (RESAYAGWVS…IELQERISLE (249 aa)). Residues 404 to 483 (QAQVGRTLEL…PHHLIADGAL (80 aa)) form the TRAM domain.

This sequence belongs to the methylthiotransferase family. MiaB subfamily. Monomer. The cofactor is [4Fe-4S] cluster.

The protein localises to the cytoplasm. The catalysed reaction is N(6)-dimethylallyladenosine(37) in tRNA + (sulfur carrier)-SH + AH2 + 2 S-adenosyl-L-methionine = 2-methylsulfanyl-N(6)-dimethylallyladenosine(37) in tRNA + (sulfur carrier)-H + 5'-deoxyadenosine + L-methionine + A + S-adenosyl-L-homocysteine + 2 H(+). In terms of biological role, catalyzes the methylthiolation of N6-(dimethylallyl)adenosine (i(6)A), leading to the formation of 2-methylthio-N6-(dimethylallyl)adenosine (ms(2)i(6)A) at position 37 in tRNAs that read codons beginning with uridine. The chain is tRNA-2-methylthio-N(6)-dimethylallyladenosine synthase from Mycobacterium sp. (strain JLS).